A 382-amino-acid chain; its full sequence is 8-amino-7-oxononanoate synthase (382 aa).

Residue arginine 26 coordinates substrate. 104 to 105 (GY) is a pyridoxal 5'-phosphate binding site. Residue histidine 129 participates in substrate binding. Residues serine 175, 200-203 (DEAH), and 232-235 (TLSK) each bind pyridoxal 5'-phosphate. Lysine 235 is subject to N6-(pyridoxal phosphate)lysine. Residue threonine 345 participates in substrate binding.

It belongs to the class-II pyridoxal-phosphate-dependent aminotransferase family. BioF subfamily. Homodimer. Pyridoxal 5'-phosphate is required as a cofactor.

The enzyme catalyses 6-carboxyhexanoyl-[ACP] + L-alanine + H(+) = (8S)-8-amino-7-oxononanoate + holo-[ACP] + CO2. Its pathway is cofactor biosynthesis; biotin biosynthesis. In terms of biological role, catalyzes the decarboxylative condensation of pimeloyl-[acyl-carrier protein] and L-alanine to produce 8-amino-7-oxononanoate (AON), [acyl-carrier protein], and carbon dioxide. The protein is 8-amino-7-oxononanoate synthase of Mycobacterium sp. (strain KMS).